The chain runs to 307 residues: Acetyl-coenzyme A carboxylase carboxyl transferase subunit beta (307 aa).

The region spanning 25-294 (LWIKDPESGE…TEENGSRRLP (270 aa)) is the CoA carboxyltransferase N-terminal domain.

This sequence belongs to the AccD/PCCB family. Acetyl-CoA carboxylase is a heterohexamer composed of biotin carboxyl carrier protein (AccB), biotin carboxylase (AccC) and two subunits each of ACCase subunit alpha (AccA) and ACCase subunit beta (AccD).

It is found in the cytoplasm. The enzyme catalyses N(6)-carboxybiotinyl-L-lysyl-[protein] + acetyl-CoA = N(6)-biotinyl-L-lysyl-[protein] + malonyl-CoA. The protein operates within lipid metabolism; malonyl-CoA biosynthesis; malonyl-CoA from acetyl-CoA: step 1/1. Functionally, component of the acetyl coenzyme A carboxylase (ACC) complex. Biotin carboxylase (BC) catalyzes the carboxylation of biotin on its carrier protein (BCCP) and then the CO(2) group is transferred by the transcarboxylase to acetyl-CoA to form malonyl-CoA. This chain is Acetyl-coenzyme A carboxylase carboxyl transferase subunit beta, found in Chelativorans sp. (strain BNC1).